Consider the following 37-residue polypeptide: Esculentin-2JDb (37 aa).

An intrachain disulfide couples Cys-31 to Cys-37.

In terms of tissue distribution, expressed by the skin glands.

It localises to the secreted. Its function is as follows. Has antibacterial activity against E.coli and S.aureus strains. This chain is Esculentin-2JDb, found in Odorrana jingdongensis (Jingdong frog).